Reading from the N-terminus, the 203-residue chain is Glycerol-3-phosphate acyltransferase (203 aa).

Helical transmembrane passes span 4 to 24 (LVLL…AVLI), 80 to 100 (PFLL…PIFF), 116 to 136 (APIG…TVFI), and 138 to 158 (GYSS…TWFV).

The protein belongs to the PlsY family. In terms of assembly, probably interacts with PlsX.

It is found in the cell inner membrane. It carries out the reaction an acyl phosphate + sn-glycerol 3-phosphate = a 1-acyl-sn-glycero-3-phosphate + phosphate. The protein operates within lipid metabolism; phospholipid metabolism. Catalyzes the transfer of an acyl group from acyl-phosphate (acyl-PO(4)) to glycerol-3-phosphate (G3P) to form lysophosphatidic acid (LPA). This enzyme utilizes acyl-phosphate as fatty acyl donor, but not acyl-CoA or acyl-ACP. In Photobacterium profundum (strain SS9), this protein is Glycerol-3-phosphate acyltransferase.